The following is a 75-amino-acid chain: MKNKPDDRRDNVDKIQYNITKTIQNCELADEMIAKTDDEKTKKTLIEKNERRREALDGMREEIKDEARDKKNGYM.

The tract at residues 53–75 (REALDGMREEIKDEARDKKNGYM) is disordered.

The protein belongs to the Tlp family.

This Clostridium botulinum (strain ATCC 19397 / Type A) protein is Protein Tlp homolog.